Here is a 259-residue protein sequence, read N- to C-terminus: GDP-perosamine N-formyltransferase (259 aa).

Residues 89–91 (SLI) and 139–143 (DENFD) contribute to the (6S)-5,6,7,8-tetrahydrofolate site.

The protein belongs to the Fmt family. As to quaternary structure, homodimer.

It carries out the reaction GDP-alpha-D-perosamine + (6R)-10-formyltetrahydrofolate = GDP-N-formyl-alpha-D-perosamine + (6S)-5,6,7,8-tetrahydrofolate + H(+). It participates in bacterial outer membrane biogenesis; lipopolysaccharide biosynthesis. Functionally, involved in the lipopolysaccharide (LPS) O-antigen biosynthesis. Catalyzes the transfer of a formyl group to GDP-perosamine, leading to the formation of GDP-N-formylperosamine. Is critical for full bacterial virulence. The sequence is that of GDP-perosamine N-formyltransferase from Brucella abortus (strain 2308).